The chain runs to 276 residues: 4-deoxy-L-threo-5-hexosulose-uronate ketol-isomerase (276 aa).

4 residues coordinate Zn(2+): H194, H196, E201, and H243.

Belongs to the KduI family. It depends on Zn(2+) as a cofactor.

The enzyme catalyses 5-dehydro-4-deoxy-D-glucuronate = 3-deoxy-D-glycero-2,5-hexodiulosonate. It participates in glycan metabolism; pectin degradation; 2-dehydro-3-deoxy-D-gluconate from pectin: step 4/5. In terms of biological role, catalyzes the isomerization of 5-dehydro-4-deoxy-D-glucuronate to 3-deoxy-D-glycero-2,5-hexodiulosonate. The polypeptide is 4-deoxy-L-threo-5-hexosulose-uronate ketol-isomerase (Shouchella clausii (strain KSM-K16) (Alkalihalobacillus clausii)).